Consider the following 255-residue polypeptide: Diphthine synthase (255 aa).

Residues L9, D85, V88, 113-114, L164, A207, and H232 contribute to the S-adenosyl-L-methionine site; that span reads SI.

Belongs to the diphthine synthase family. As to quaternary structure, homodimer.

The enzyme catalyses 2-[(3S)-amino-3-carboxypropyl]-L-histidyl-[translation elongation factor 2] + 3 S-adenosyl-L-methionine = diphthine-[translation elongation factor 2] + 3 S-adenosyl-L-homocysteine + 3 H(+). It participates in protein modification; peptidyl-diphthamide biosynthesis. S-adenosyl-L-methionine-dependent methyltransferase that catalyzes the trimethylation of the amino group of the modified target histidine residue in translation elongation factor 2 (EF-2), to form an intermediate called diphthine. The three successive methylation reactions represent the second step of diphthamide biosynthesis. In Methanococcus vannielii (strain ATCC 35089 / DSM 1224 / JCM 13029 / OCM 148 / SB), this protein is Diphthine synthase.